The following is a 457-amino-acid chain: G-protein coupled receptor 135 (457 aa).

Residues 1-27 (MEEQARPPSRPAASATLPGSAHPGGAA) are disordered. Residues 1 to 64 (MEEQARPPSR…EAAGSRGPAP (64 aa)) are Extracellular-facing. An N-linked (GlcNAc...) asparagine glycan is attached at asparagine 47. A helical transmembrane segment spans residues 65–85 (LLWHGAAVAAQALVLLLIFLL). The Cytoplasmic segment spans residues 86–109 (SSLGNCAVMGVIVKHRQLRTVTNA). A helical transmembrane segment spans residues 110-130 (FILSLSLSDLLTALLCLPAAF). Residues 131–156 (LDLFAPPGDSGPWRSFCAASRFFSSC) are Extracellular-facing. Residues 157–177 (FGIVSTFSVALISLDRYCAIV) form a helical membrane-spanning segment. The Cytoplasmic portion of the chain corresponds to 178–189 (RPPRDKLGRRRA). Residues 190–210 (LQLLAGAWLAALGFSLPWELL) traverse the membrane as a helical segment. Topologically, residues 211–235 (RAPREPPTPQSFHRCLYRTSPDPAQ) are extracellular. A helical transmembrane segment spans residues 236-256 (LGAAYSVGLVVACYLLPFLLM). Residues 257 to 295 (CFCRYHICKTVRLSDVRVRPMTTYARVLRFFSEVRTATT) are Cytoplasmic-facing. A helical membrane pass occupies residues 296–316 (VLIMIVFVICCWGPYCFLVLL). Residues 317–329 (AATRQGQTTQAPS) are Extracellular-facing. The chain crosses the membrane as a helical span at residues 330-350 (LLNVAAVWLTWANGAINPVIY). The Cytoplasmic portion of the chain corresponds to 351 to 457 (AIRNPNISMF…HKSETRDSSI (107 aa)).

The protein belongs to the G-protein coupled receptor 1 family. As to quaternary structure, interacts with MTNR1B. Interacts with ARRB1 and ARRB2 in a spontaneous and agonist-independent manner; leading to the internalization of GPR135 in the endosomal compartment.

It localises to the cell membrane. The protein localises to the endosome membrane. In terms of biological role, orphan receptor. Has spontaneous activity for beta-arrestin recruitment. Shows a reciprocal regulatory interaction with the melatonin receptor MTNR1B most likely through receptor heteromerization. The polypeptide is G-protein coupled receptor 135 (Gpr135) (Rattus norvegicus (Rat)).